Reading from the N-terminus, the 289-residue chain is Iodotyrosine deiodinase 1 (289 aa).

The chain crosses the membrane as a helical span at residues 1–21 (MFLLTPVLVAVVCILMVWIFK). Residues 100–104 (RRSVR) and 128–129 (SG) contribute to the FMN site. Residues alanine 130, glutamate 157, tyrosine 161, and lysine 182 each coordinate 3,5-diiodo-L-tyrosine. Alanine 130, glutamate 157, tyrosine 161, and lysine 182 together coordinate 3-iodo-L-tyrosine. FMN-binding positions include 237–239 (TTT) and arginine 279.

The protein belongs to the nitroreductase family. As to quaternary structure, homodimer. FMN is required as a cofactor. Detected in thyroid (at protein level).

Its subcellular location is the cell membrane. The protein localises to the cytoplasmic vesicle membrane. The enzyme catalyses 2 iodide + L-tyrosine + 2 NADP(+) = 3,5-diiodo-L-tyrosine + 2 NADPH + H(+). It carries out the reaction iodide + L-tyrosine + NADP(+) = 3-iodo-L-tyrosine + NADPH. It catalyses the reaction 3-iodo-L-tyrosine + iodide + NADP(+) = 3,5-diiodo-L-tyrosine + NADPH + H(+). The catalysed reaction is L-tyrosine + chloride + NADP(+) = 3-chloro-L-tyrosine + NADPH. The enzyme catalyses bromide + L-tyrosine + NADP(+) = 3-bromo-L-tyrosine + NADPH. Its function is as follows. Catalyzes the dehalogenation of halotyrosines such as 3-bromo-L-tyrosine, 3-chloro-L-tyrosine, 3-iodo-L-tyrosine and 3,5-diiodo-L-tyrosine. During thyroid hormone biosynthesis, facilitates iodide salvage by catalysing the oxidative NADPH-dependent deiodination of the halogenated by-products of thyroid hormone production, monoiodotyrosine (L-MIT) and diiodotyrosine (L-DIT). The scavanged iodide can then reenter the hormone-producing pathways. Acts more efficiently on 3-iodo-L-tyrosine than 3,5-diiodo-L-tyrosine. In Sus scrofa (Pig), this protein is Iodotyrosine deiodinase 1 (IYD).